A 155-amino-acid polypeptide reads, in one-letter code: S-ribosylhomocysteine lyase (155 aa).

Fe cation-binding residues include histidine 57, histidine 61, and cysteine 124.

This sequence belongs to the LuxS family. Homodimer. Fe cation serves as cofactor.

The catalysed reaction is S-(5-deoxy-D-ribos-5-yl)-L-homocysteine = (S)-4,5-dihydroxypentane-2,3-dione + L-homocysteine. In terms of biological role, involved in the synthesis of autoinducer 2 (AI-2) which is secreted by bacteria and is used to communicate both the cell density and the metabolic potential of the environment. The regulation of gene expression in response to changes in cell density is called quorum sensing. Catalyzes the transformation of S-ribosylhomocysteine (RHC) to homocysteine (HC) and 4,5-dihydroxy-2,3-pentadione (DPD). This Listeria monocytogenes serotype 4b (strain CLIP80459) protein is S-ribosylhomocysteine lyase.